Consider the following 372-residue polypeptide: Maltose/maltodextrin import ATP-binding protein MalK (372 aa).

Residues 4-234 (VTLKNVCKAY…PQNRFVAGFI (231 aa)) form the ABC transporter domain. 36–43 (GPSGCGKS) contacts ATP.

This sequence belongs to the ABC transporter superfamily. Maltooligosaccharide importer (TC 3.A.1.1.1) family. In terms of assembly, the complex is composed of two ATP-binding proteins (MalK), two transmembrane proteins (MalG and MalK) and a solute-binding protein (MalE).

Its subcellular location is the cell inner membrane. The catalysed reaction is D-maltose(out) + ATP + H2O = D-maltose(in) + ADP + phosphate + H(+). Its function is as follows. Part of the ABC transporter complex MalEFGK involved in maltose/maltodextrin import. Responsible for energy coupling to the transport system. This chain is Maltose/maltodextrin import ATP-binding protein MalK, found in Vibrio parahaemolyticus serotype O3:K6 (strain RIMD 2210633).